We begin with the raw amino-acid sequence, 106 residues long: MFGWGRGWFGRGRGFWRYFPVSTVGGRYRYVGPCRCGLGPHAFYVDEKTGALVHAWDLYRGYVPGYAEVDERRYLEETIKELEEEKRMLEEELARIKKRLDELKKD.

This is an uncharacterized protein from Methanocaldococcus jannaschii (strain ATCC 43067 / DSM 2661 / JAL-1 / JCM 10045 / NBRC 100440) (Methanococcus jannaschii).